The primary structure comprises 262 residues: Putative hydro-lyase Mflv_5194 (262 aa).

It belongs to the D-glutamate cyclase family.

The sequence is that of Putative hydro-lyase Mflv_5194 from Mycolicibacterium gilvum (strain PYR-GCK) (Mycobacterium gilvum (strain PYR-GCK)).